The chain runs to 1226 residues: Chromosome-associated kinesin KIF4 (1226 aa).

Residues 8–337 (PVRVALRCRP…LRYADRARKI (330 aa)) enclose the Kinesin motor domain. 87-94 (GQTGSGKT) lines the ATP pocket. The stretch at 351 to 1006 (ELQRLKLQVQ…YKQKLALLHV (656 aa)) forms a coiled coil. Over residues 494 to 505 (EAASFPVPEEDS) the composition is skewed to acidic residues. Disordered stretches follow at residues 494–516 (EAAS…GFTT), 722–741 (QRQK…GMEG), and 1052–1078 (DLLS…KQSK). Basic and acidic residues predominate over residues 722-735 (QRQKEAMEKRKDSQ). A globular region spans residues 1007–1226 (ASGKKLHNIL…SGCSAITEDE (220 aa)). Residues 1053–1064 (LLSESESEEESD) are compositionally biased toward acidic residues.

This sequence belongs to the TRAFAC class myosin-kinesin ATPase superfamily. Kinesin family. Chromokinesin subfamily. Requires [2Fe-2S] cluster as cofactor. It depends on [4Fe-4S] cluster as a cofactor. Expressed in oocytes, eggs, testes and brain.

It is found in the nucleus. The protein localises to the chromosome. Its subcellular location is the cytoplasm. The protein resides in the cytoskeleton. Its function is as follows. Iron-sulfur (Fe-S) cluster binding motor protein that has a role in chromosome segregation during mitosis. Required for mitotic chromosomal positioning and bipolar spindle stabilization. The sequence is that of Chromosome-associated kinesin KIF4 (kif4) from Xenopus laevis (African clawed frog).